The sequence spans 552 residues: C-type lectin receptor-like tyrosine-protein kinase At1g52310 (552 aa).

A signal peptide spans 1-27 (MELKWVSCRKQSLFLISCLALLCLASL). Residues 28-201 (DTISCESTQN…DIKCRNCHKY (174 aa)) are Extracellular-facing. N-linked (GlcNAc...) asparagine glycosylation is found at Asn37, Asn59, Asn69, Asn106, Asn118, Asn137, Asn154, Asn169, and Asn180. In terms of domain architecture, C-type lectin spans 59-188 (NQTKCYAYFK…CNASHAFVCA (130 aa)). 2 disulfides stabilise this stretch: Cys80-Cys187 and Cys164-Cys179. A helical membrane pass occupies residues 202-222 (LVILAVVSGLILFTTFAIILW). Over 223–552 (LLVYKRSKKR…QQLVQPLEVK (330 aa)) the chain is Cytoplasmic. The region spanning 268–546 (SEANRLAGDA…HVVHQLQQLV (279 aa)) is the Protein kinase domain. ATP-binding positions include 274–282 (AGDAKTGGT) and Lys296. Asp394 acts as the Proton acceptor in catalysis.

Belongs to the protein kinase superfamily. Tyr protein kinase family.

The protein localises to the cell membrane. The enzyme catalyses L-tyrosyl-[protein] + ATP = O-phospho-L-tyrosyl-[protein] + ADP + H(+). This is C-type lectin receptor-like tyrosine-protein kinase At1g52310 from Arabidopsis thaliana (Mouse-ear cress).